The chain runs to 480 residues: MKTAELIFVPLPETGHLLSTIEFGKRLLNLDRRISMITILSMNLPYAPHADASLASLTASEPGIRIISLPEIHDPPPIKLLDTSSETYILDFIHKNIPCLRKTIQDLVSSSSSSGGGSSHVAGLILDFFCVGLIDIGREVNLPSYIFMTSNFGFLGVLQYLPERQRLTPSEFDESSGEEELHIPAFVNRVPAKVLPPGVFDKLSYGSLVKIGERLHEAKGILVNSFTQVEPYAAEHFSQGRDYPHVYPVGPVLNLTGRTNPGLASAQYKEMMKWLDEQPDSSVLFLCFGSMGVFPAPQITEIAHALELIGCRFIWAIRTNMAGDGDPQEPLPEGFVDRTMGRGIVCSWAPQVDILAHKATGGFVSHCGWNSVQESLWYGVPIATWPMYAEQQLNAFEMVKELGLAVEIRLDYVADGDRVTLEIVSADEIATAVRSLMDSDNPVRKKVIEKSSVARKAVGDGGSSTVATCNFIKDILGDHF.

UDP-alpha-D-glucose is bound by residues Ser290, 349–351 (APQ), 366–374 (HCGWNSVQE), and 388–391 (YAEQ).

This sequence belongs to the UDP-glycosyltransferase family.

Its function is as follows. Possesses low quercetin 3-O-glucosyltransferase activity in vitro. The polypeptide is UDP-glycosyltransferase 71C5 (UGT71C5) (Arabidopsis thaliana (Mouse-ear cress)).